An 886-amino-acid chain; its full sequence is Alanine--tRNA ligase (886 aa).

Zn(2+)-binding residues include His564, His568, Cys666, and His670.

Belongs to the class-II aminoacyl-tRNA synthetase family. It depends on Zn(2+) as a cofactor.

Its subcellular location is the cytoplasm. It carries out the reaction tRNA(Ala) + L-alanine + ATP = L-alanyl-tRNA(Ala) + AMP + diphosphate. Functionally, catalyzes the attachment of alanine to tRNA(Ala) in a two-step reaction: alanine is first activated by ATP to form Ala-AMP and then transferred to the acceptor end of tRNA(Ala). Also edits incorrectly charged Ser-tRNA(Ala) and Gly-tRNA(Ala) via its editing domain. This is Alanine--tRNA ligase from Prochlorococcus marinus (strain AS9601).